The following is a 343-amino-acid chain: MTITAQEALQRTIDHREIFYDEMLSLMRQIMAGEISPLMTAAIITGLRVKKETIGEITAAATVMRELATKVTVPGPDRNFLDVVGTGGDGANTFNISTTTIFVAAAAGARVAKHGGRSVSSKSGAADVLEALGVKLGLAPEQVAESIEATGIGFMYAPAHHSAMKNVAAVRREMGVRTIFNILGPLTNPASAPNTLMGVFHPDLVGIQARVMQRLGANHVLVVYGMDGMDEVSLGASTMVGELKDGEIREYQIHPEDFGLQMMGTRNLAVESAEQSKATLLGVLDNRPGPAREIVILNAGVALYTANLVDSIAVGIGRARELIESGAARAKLDEFIAFNRKFA.

5-phospho-alpha-D-ribose 1-diphosphate is bound by residues Gly85, 88 to 89 (GD), Thr93, 95 to 98 (NIST), 113 to 121 (KHGGRSVSS), and Ala125. Gly85 contributes to the anthranilate binding site. Ser97 lines the Mg(2+) pocket. An anthranilate-binding site is contributed by Arg171. Asp230 and Glu231 together coordinate Mg(2+).

It belongs to the anthranilate phosphoribosyltransferase family. In terms of assembly, homodimer. Requires Mg(2+) as cofactor.

The enzyme catalyses N-(5-phospho-beta-D-ribosyl)anthranilate + diphosphate = 5-phospho-alpha-D-ribose 1-diphosphate + anthranilate. Its pathway is amino-acid biosynthesis; L-tryptophan biosynthesis; L-tryptophan from chorismate: step 2/5. Functionally, catalyzes the transfer of the phosphoribosyl group of 5-phosphorylribose-1-pyrophosphate (PRPP) to anthranilate to yield N-(5'-phosphoribosyl)-anthranilate (PRA). The polypeptide is Anthranilate phosphoribosyltransferase (Aromatoleum aromaticum (strain DSM 19018 / LMG 30748 / EbN1) (Azoarcus sp. (strain EbN1))).